The primary structure comprises 535 residues: Glutamate--cysteine ligase (535 aa).

The protein belongs to the glutamate--cysteine ligase type 1 family. Type 1 subfamily.

The catalysed reaction is L-cysteine + L-glutamate + ATP = gamma-L-glutamyl-L-cysteine + ADP + phosphate + H(+). It participates in sulfur metabolism; glutathione biosynthesis; glutathione from L-cysteine and L-glutamate: step 1/2. The sequence is that of Glutamate--cysteine ligase from Pseudomonas syringae pv. syringae.